Here is an 843-residue protein sequence, read N- to C-terminus: Protein P (843 aa).

The interval 1 to 177 (MPLSYQHFRK…FCGSPYSWEQ (177 aa)) is terminal protein domain (TP). A spacer region spans residues 178 to 346 (ELQHGRLVFQ…YCLSHIVNLL (169 aa)). Residues 347–690 (EDWGPCTEHG…YMNLYPVARQ (344 aa)) form a polymerase/reverse transcriptase domain (RT) region. A Reverse transcriptase domain is found at 357-600 (EHHIRIPRTP…YSLNFMGYVI (244 aa)). Residues aspartate 429, aspartate 551, and aspartate 552 each coordinate Mg(2+).

This sequence belongs to the hepadnaviridae P protein family.

It carries out the reaction DNA(n) + a 2'-deoxyribonucleoside 5'-triphosphate = DNA(n+1) + diphosphate. The enzyme catalyses Endonucleolytic cleavage to 5'-phosphomonoester.. Its activity is regulated as follows. Activated by host HSP70 and HSP40 in vitro to be able to bind the epsilon loop of the pgRNA. Because deletion of the RNase H region renders the protein partly chaperone-independent, the chaperones may be needed indirectly to relieve occlusion of the RNA-binding site by this domain. Inhibited by several reverse-transcriptase inhibitors: Lamivudine, Adefovir and Entecavir. In terms of biological role, multifunctional enzyme that converts the viral RNA genome into dsDNA in viral cytoplasmic capsids. This enzyme displays a DNA polymerase activity that can copy either DNA or RNA templates, and a ribonuclease H (RNase H) activity that cleaves the RNA strand of RNA-DNA heteroduplexes in a partially processive 3'- to 5'-endonucleasic mode. Neo-synthesized pregenomic RNA (pgRNA) are encapsidated together with the P protein, and reverse-transcribed inside the nucleocapsid. Initiation of reverse-transcription occurs first by binding the epsilon loop on the pgRNA genome, and is initiated by protein priming, thereby the 5'-end of (-)DNA is covalently linked to P protein. Partial (+)DNA is synthesized from the (-)DNA template and generates the relaxed circular DNA (RC-DNA) genome. After budding and infection, the RC-DNA migrates in the nucleus, and is converted into a plasmid-like covalently closed circular DNA (cccDNA). The activity of P protein does not seem to be necessary for cccDNA generation, and is presumably released from (+)DNA by host nuclear DNA repair machinery. The chain is Protein P from Homo sapiens (Human).